The sequence spans 418 residues: Histidinol dehydrogenase (418 aa).

NAD(+) is bound by residues Y119, Q180, and N203. The substrate site is built by T226, Q248, and H251. The Zn(2+) site is built by Q248 and H251. Catalysis depends on proton acceptor residues E316 and H317. Residues H317, D350, E404, and H409 each coordinate substrate. D350 provides a ligand contact to Zn(2+). Position 409 (H409) interacts with Zn(2+).

This sequence belongs to the histidinol dehydrogenase family. It depends on Zn(2+) as a cofactor.

The catalysed reaction is L-histidinol + 2 NAD(+) + H2O = L-histidine + 2 NADH + 3 H(+). It functions in the pathway amino-acid biosynthesis; L-histidine biosynthesis; L-histidine from 5-phospho-alpha-D-ribose 1-diphosphate: step 9/9. Functionally, catalyzes the sequential NAD-dependent oxidations of L-histidinol to L-histidinaldehyde and then to L-histidine. The protein is Histidinol dehydrogenase of Staphylococcus aureus (strain COL).